A 924-amino-acid chain; its full sequence is Intercellular adhesion molecule 5 (924 aa).

The N-terminal stretch at 1 to 31 is a signal peptide; sequence MPGPSPGLRRALLGLWAALGLGLFGLSAVSQ. Residues 32 to 835 are Extracellular-facing; that stretch reads EPFWADLQPR…RITVRVAGPW (804 aa). 9 Ig-like C2-type domains span residues 48 to 130, 135 to 235, 242 to 329, 337 to 402, 408 to 486, 491 to 568, 573 to 662, 666 to 739, and 746 to 830; these read GGSL…PLPP, GENF…RLAA, GSER…LLTL, GQMV…SAEL, PRLD…VTLT, PALD…VAVT, PRFE…VVSA, PEMD…RTVT, and PVVA…ITVR. Asparagine 54 carries N-linked (GlcNAc...) (high mannose) asparagine glycosylation. 2 disulfides stabilise this stretch: cysteine 55–cysteine 99 and cysteine 59–cysteine 103. N-linked (GlcNAc...) asparagine glycans are attached at residues asparagine 74 and asparagine 137. Cysteine 142 and cysteine 198 are disulfide-bonded. Threonine 182 and threonine 184 each carry phosphothreonine. N-linked (GlcNAc...) asparagine glycosylation is found at asparagine 195 and asparagine 214. Cysteines 249 and 302 form a disulfide. N-linked (GlcNAc...) asparagine glycans are attached at residues asparagine 303, asparagine 316, asparagine 371, and asparagine 397. A disulfide bond links cysteine 344 and cysteine 383. Intrachain disulfides connect cysteine 415/cysteine 470, cysteine 498/cysteine 552, and cysteine 580/cysteine 645. N-linked (GlcNAc...) asparagine glycosylation is found at asparagine 583 and asparagine 646. Cysteine 673 and cysteine 725 form a disulfide bridge. Asparagine 764, asparagine 795, and asparagine 796 each carry an N-linked (GlcNAc...) asparagine glycan. The cysteines at positions 769 and 814 are disulfide-linked. A helical transmembrane segment spans residues 836–856; it reads LWVAVGGAAGGAALLAAGAGL. The Cytoplasmic segment spans residues 857 to 924; the sequence is AFYVQSTACK…EVFAIQLTSA (68 aa). The segment covering 891 to 903 has biased composition (gly residues); that stretch reads AGGAAGAEGGPEA. The disordered stretch occupies residues 891–911; sequence AGGAAGAEGGPEAAGGAAESP.

It belongs to the immunoglobulin superfamily. ICAM family. Post-translationally, glycosylation at Asn-54 is critical for functional folding. As to expression, expressed on neurons in the most rostral segment of the mammalian brain, the telencephalon.

It localises to the membrane. Functionally, ICAM proteins are ligands for the leukocyte adhesion protein LFA-1 (integrin alpha-L/beta-2). This is Intercellular adhesion molecule 5 (ICAM5) from Homo sapiens (Human).